Here is a 401-residue protein sequence, read N- to C-terminus: MRINSELANKFSASTVHLEHITTALSCLTPFGSKDDVLIFIDADGLSFVRENNHVIKIQLLLSRELFMSYSYRNETEDHMKLCVKINHILDSVSVMNRNSDDIVECTLSYDGHGSPFVLIFEDSFISERVEYSTYLIKDFDTNGLELDRERISFEAIIKGEALHSALKDLKEIGCKECYVYAKTEANDENVFALISKSQLGFSKIKLPSNRSILEKLQVFDGDSTTVIDGFAVIGFFDFTSFDKIRKSTKIASKVLFRMDVHGVLSVNILSQTDDVIITDTTRPSNNRPGSIRQLQLPKDYPGIVIEVCMLEKESIDEAAQTEIELLMETNELGNRNSFKKSTIRKRYGTDKGNETSNDNLLQLNGKKIKLPSEEENNKNRESEDEENHCKYPTKDIPIFF.

The disordered stretch occupies residues 367 to 393 (KKIKLPSEEENNKNRESEDEENHCKYP). Positions 371–393 (LPSEEENNKNRESEDEENHCKYP) are enriched in basic and acidic residues. S383 carries the post-translational modification Phosphoserine.

It belongs to the rad1 family. Component of the checkpoint clamp complex composed of DDC1, MEC3 and RAD17. The interaction with MEC3 is performed in a RAD17-dependent manner. The checkpoint clamp complex loads onto DNA. Interacts with the DNA polymerase zeta subunit REV7. 2 RAD17 subunits also form a heterotrimer with one MEC3 subunit.

It is found in the nucleus. Component of the checkpoint clamp complex involved in the surveillance mechanism that allows the DNA repair pathways to act to restore the integrity of the DNA prior to DNA synthesis or separation of the replicated chromosomes. Associates with sites of DNA damage and modulates the MEC1 signaling pathway and the activation of RAD53 in response to DNA damage at phase G1. The complex also physically regulates DNA polymerase zeta-dependent mutagenesis by controlling the access of polymerase zeta to damaged DNA. Contrary to its human counterpart, the 9-1-1 complex, the checkpoint clamp complex shows no detectable exonuclease activity. The sequence is that of DNA damage checkpoint control protein RAD17 (RAD17) from Saccharomyces cerevisiae (strain ATCC 204508 / S288c) (Baker's yeast).